We begin with the raw amino-acid sequence, 432 residues long: D-amino acid dehydrogenase (432 aa).

An FAD-binding site is contributed by 3–17 (VVILGSGVVGVTSAW).

Belongs to the DadA oxidoreductase family. The cofactor is FAD.

It is found in the cell inner membrane. The catalysed reaction is a D-alpha-amino acid + A + H2O = a 2-oxocarboxylate + AH2 + NH4(+). Its pathway is amino-acid degradation; D-alanine degradation; NH(3) and pyruvate from D-alanine: step 1/1. Functionally, oxidative deamination of D-amino acids. The polypeptide is D-amino acid dehydrogenase (Salmonella typhi).